Reading from the N-terminus, the 172-residue chain is RNA pyrophosphohydrolase (172 aa).

The Nudix hydrolase domain occupies 6–149 (GFRANVGIII…KRDVYRKVMK (144 aa)). The Nudix box signature appears at 38 to 59 (GGVDEGETPEEAMFRELYEEVG).

Belongs to the Nudix hydrolase family. RppH subfamily. The cofactor is a divalent metal cation.

Functionally, accelerates the degradation of transcripts by removing pyrophosphate from the 5'-end of triphosphorylated RNA, leading to a more labile monophosphorylated state that can stimulate subsequent ribonuclease cleavage. The chain is RNA pyrophosphohydrolase from Shewanella sediminis (strain HAW-EB3).